Reading from the N-terminus, the 463-residue chain is Methionine aminopeptidase 2-2 (463 aa).

Residues 1–107 (MGAKTFEGGD…VPLSQLFPDG (107 aa)) are disordered. Over residues 37-53 (EDGDGEFGTDDDDDGDG) the composition is skewed to acidic residues. Basic residues predominate over residues 69-83 (PKKRKRSKKKKSNKK). Position 215 (His215) interacts with substrate. Residues Asp236, Asp247, and His316 each coordinate a divalent metal cation. Position 324 (His324) interacts with substrate. A divalent metal cation-binding residues include Glu349 and Glu444.

It belongs to the peptidase M24A family. Methionine aminopeptidase eukaryotic type 2 subfamily. Requires Co(2+) as cofactor. Zn(2+) serves as cofactor. It depends on Mn(2+) as a cofactor. Fe(2+) is required as a cofactor.

The protein resides in the cytoplasm. It catalyses the reaction Release of N-terminal amino acids, preferentially methionine, from peptides and arylamides.. Functionally, cotranslationally removes the N-terminal methionine from nascent proteins. The N-terminal methionine is often cleaved when the second residue in the primary sequence is small and uncharged (Met-Ala-, Cys, Gly, Pro, Ser, Thr, or Val). The chain is Methionine aminopeptidase 2-2 from Talaromyces marneffei (strain ATCC 18224 / CBS 334.59 / QM 7333) (Penicillium marneffei).